A 450-amino-acid chain; its full sequence is Chromosomal replication initiator protein DnaA (450 aa).

The interval 1–84 (MTENEQIFWN…AVDYVYEEDL (84 aa)) is domain I, interacts with DnaA modulators. Residues 84–109 (LIIEQQHQGQQGYTEQAFQQLPAVQS) form a domain II region. The domain III, AAA+ region stretch occupies residues 110 to 328 (DLNPKYSFDN…GALKDISLVA (219 aa)). 4 residues coordinate ATP: glycine 154, glycine 156, lysine 157, and threonine 158. The tract at residues 329–450 (NFKQIDTITV…EIETIKNKIK (122 aa)) is domain IV, binds dsDNA.

This sequence belongs to the DnaA family. As to quaternary structure, oligomerizes as a right-handed, spiral filament on DNA at oriC.

The protein resides in the cytoplasm. Plays an essential role in the initiation and regulation of chromosomal replication. ATP-DnaA binds to the origin of replication (oriC) to initiate formation of the DNA replication initiation complex once per cell cycle. Binds the DnaA box (a 9 base pair repeat at the origin) and separates the double-stranded (ds)DNA. Forms a right-handed helical filament on oriC DNA; dsDNA binds to the exterior of the filament while single-stranded (ss)DNA is stabiized in the filament's interior. The ATP-DnaA-oriC complex binds and stabilizes one strand of the AT-rich DNA unwinding element (DUE), permitting loading of DNA polymerase. After initiation quickly degrades to an ADP-DnaA complex that is not apt for DNA replication. Binds acidic phospholipids. The chain is Chromosomal replication initiator protein DnaA from Streptococcus equi subsp. zooepidemicus (strain MGCS10565).